Reading from the N-terminus, the 77-residue chain is Acyl carrier protein (77 aa).

In terms of domain architecture, Carrier spans 1 to 76 (MSLEDDVKSI…DVITYIKTRQ (76 aa)). At S36 the chain carries O-(pantetheine 4'-phosphoryl)serine.

It belongs to the acyl carrier protein (ACP) family. In terms of processing, 4'-phosphopantetheine is transferred from CoA to a specific serine of apo-ACP by AcpS. This modification is essential for activity because fatty acids are bound in thioester linkage to the sulfhydryl of the prosthetic group.

The protein resides in the cytoplasm. It functions in the pathway lipid metabolism; fatty acid biosynthesis. Its function is as follows. Carrier of the growing fatty acid chain in fatty acid biosynthesis. This chain is Acyl carrier protein, found in Chlamydia caviae (strain ATCC VR-813 / DSM 19441 / 03DC25 / GPIC) (Chlamydophila caviae).